Here is a 186-residue protein sequence, read N- to C-terminus: Peptidyl-tRNA hydrolase (186 aa).

Position 14 (Tyr-14) interacts with tRNA. His-19 acts as the Proton acceptor in catalysis. TRNA is bound by residues Phe-65, Asn-67, and Asn-113.

This sequence belongs to the PTH family. As to quaternary structure, monomer.

The protein resides in the cytoplasm. It carries out the reaction an N-acyl-L-alpha-aminoacyl-tRNA + H2O = an N-acyl-L-amino acid + a tRNA + H(+). In terms of biological role, hydrolyzes ribosome-free peptidyl-tRNAs (with 1 or more amino acids incorporated), which drop off the ribosome during protein synthesis, or as a result of ribosome stalling. Its function is as follows. Catalyzes the release of premature peptidyl moieties from peptidyl-tRNA molecules trapped in stalled 50S ribosomal subunits, and thus maintains levels of free tRNAs and 50S ribosomes. In Limosilactobacillus fermentum (strain NBRC 3956 / LMG 18251) (Lactobacillus fermentum), this protein is Peptidyl-tRNA hydrolase.